Consider the following 367-residue polypeptide: Apolipoprotein A-V (367 aa).

Positions 1–20 are cleaved as a signal peptide; it reads MVAVLTWALALLSAFATVQT. Ser56 is subject to Phosphoserine. Residues 71 to 90 are disordered; that stretch reads LGPLSGQGREPPGLPHDPEG.

This sequence belongs to the apolipoprotein A1/A4/E family. As to quaternary structure, interacts with GPIHBP1. Interacts with SORL1; this interaction leads to APOA5 internalization and sorting either to lysosomes and degradation, or to the trans-Golgi network. Phosphorylated by FAM20C in the extracellular medium.

Its subcellular location is the secreted. It is found in the early endosome. The protein resides in the late endosome. It localises to the golgi apparatus. The protein localises to the trans-Golgi network. Functionally, minor apolipoprotein mainly associated with HDL and to a lesser extent with VLDL. May also be associated with chylomicrons. Important determinant of plasma triglyceride (TG) levels by both being a potent stimulator of apo-CII lipoprotein lipase (LPL) TG hydrolysis and an inhibitor of the hepatic VLDL-TG production rate (without affecting the VLDL-apoB production rate). Activates poorly lecithin:cholesterol acyltransferase (LCAT) and does not enhance efflux of cholesterol from macrophages. Binds heparin. In Leptonychotes weddellii (Weddell seal), this protein is Apolipoprotein A-V (APOA5).